A 236-amino-acid polypeptide reads, in one-letter code: MAEAEDSPGEQEATSSKPLFAGLSDVSISQDIPIEGEITIPSGTRAQECDSSTLNESIRRTIMRDLKAVGRKFMHVLYPRKSNTLLRDWDLWGPLILCVSLALMLQKSSVEGKRDGGSPEFAEVFVIIWFGAVTITLNSKLLGGNISFFQSLCVLGYCVLPLNIAMLICRLLLLAGQGPINFMIRLFVVLVMFAWSVIASTAFLADCQPPNRKALAVYPVFLFYFVVSWMILTFTP.

At alanine 2 the chain carries N-acetylalanine. At 2 to 84 (AEAEDSPGEQ…HVLYPRKSNT (83 aa)) the chain is on the cytoplasmic side. Serine 7 is modified (phosphoserine). A helical transmembrane segment spans residues 85-105 (LLRDWDLWGPLILCVSLALML). Topologically, residues 106-116 (QKSSVEGKRDG) are lumenal. The chain crosses the membrane as a helical span at residues 117–137 (GSPEFAEVFVIIWFGAVTITL). Over 138–147 (NSKLLGGNIS) the chain is Cytoplasmic. Residues 148-168 (FFQSLCVLGYCVLPLNIAMLI) traverse the membrane as a helical segment. Topologically, residues 169-185 (CRLLLLAGQGPINFMIR) are lumenal. A helical transmembrane segment spans residues 186-206 (LFVVLVMFAWSVIASTAFLAD). The Cytoplasmic portion of the chain corresponds to 207-213 (CQPPNRK). The chain crosses the membrane as a helical span at residues 214–234 (ALAVYPVFLFYFVVSWMILTF). Over 235 to 236 (TP) the chain is Lumenal.

Belongs to the YIP1 family. In terms of assembly, predominantly interacts with YIPF1 or YIPF2, but may also form a ternary complex with YIPF1 and YIPF2. This interaction may stabilize YIPF1 and YIPF2.

Its subcellular location is the golgi apparatus membrane. May be required for stable YIPF1 and YIPF2 protein expression. The chain is Protein YIPF6 (Yipf6) from Rattus norvegicus (Rat).